Reading from the N-terminus, the 82-residue chain is Mu-conotoxin MrVIB (82 aa).

The signal sequence occupies residues 1 to 22; the sequence is MKLTCMMIVAVLFLTAWTLVMA. The propeptide occupies 23 to 49; it reads DDSNNGLANHFLKSRDEMEDPEASKLE. Intrachain disulfides connect Cys-53/Cys-71, Cys-60/Cys-76, and Cys-70/Cys-81.

This sequence belongs to the conotoxin O1 superfamily. As to expression, expressed by the venom duct.

It is found in the secreted. Its function is as follows. MuO-conotoxins are gating-modifier toxins that inhibit sodium current by trapping the domain II voltage sensor in the closed position to prevent opening of the sodium channel. This toxin has a preference for Nav1.4/SCN4A over Nav1.2/SCN2A sodium channels. It blocks Nav channels by interacting mainly with the C-terminal part of the pore loop of domain-3. It also blocks fast-inactivating calcium current. Blocks Nav1.8/SCN10A sodium channels and has potent and long-lasting local anesthetic effects. It can also block propagation of action potentials in A- and C-fibers in sciatic nerve as well as skeletal muscle in isolated preparations. The sequence is that of Mu-conotoxin MrVIB from Conus marmoreus (Marble cone).